The sequence spans 294 residues: Probable 2-(5''-triphosphoribosyl)-3'-dephosphocoenzyme-A synthase (294 aa).

Belongs to the CitG/MdcB family.

It catalyses the reaction 3'-dephospho-CoA + ATP = 2'-(5''-triphospho-alpha-D-ribosyl)-3'-dephospho-CoA + adenine. This chain is Probable 2-(5''-triphosphoribosyl)-3'-dephosphocoenzyme-A synthase, found in Streptococcus pyogenes serotype M3 (strain ATCC BAA-595 / MGAS315).